Reading from the N-terminus, the 732-residue chain is Catalase-peroxidase (732 aa).

The disordered stretch occupies residues 1 to 21 (MSMAEMRCPFSGHGAATTPAS). A signal peptide spans 1-22 (MSMAEMRCPFSGHGAATTPASA). Residues 97 to 220 (WHSAGTYRLA…LAATEMGLIY (124 aa)) constitute a cross-link (tryptophyl-tyrosyl-methioninium (Trp-Tyr) (with M-246)). His-98 acts as the Proton acceptor in catalysis. The tryptophyl-tyrosyl-methioninium (Tyr-Met) (with W-97) cross-link spans 220–246 (YVNPEGPHGEPDPVASGREVRDTFARM). His-261 contacts heme b.

Belongs to the peroxidase family. Peroxidase/catalase subfamily. Homodimer or homotetramer. Requires heme b as cofactor. In terms of processing, formation of the three residue Trp-Tyr-Met cross-link is important for the catalase, but not the peroxidase activity of the enzyme.

It catalyses the reaction H2O2 + AH2 = A + 2 H2O. The catalysed reaction is 2 H2O2 = O2 + 2 H2O. In terms of biological role, bifunctional enzyme with both catalase and broad-spectrum peroxidase activity. In Synechococcus sp. (strain RCC307), this protein is Catalase-peroxidase.